A 596-amino-acid polypeptide reads, in one-letter code: Probable tripeptidyl-peptidase SED2 (596 aa).

The signal sequence occupies residues 1–16 (MRLLKFVCLLASVAAA). The propeptide at 17 to 203 (KPTPGASHKV…LESMSVEEFA (187 aa)) is removed in mature form. In terms of domain architecture, Peptidase S53 spans 210 to 596 (LVTTACLREL…NFQALTKVLP (387 aa)). N265 is a glycosylation site (N-linked (GlcNAc...) asparagine). Residues E286 and D290 each act as charge relay system in the active site. N403 is a glycosylation site (N-linked (GlcNAc...) asparagine). S501 (charge relay system) is an active-site residue. Ca(2+)-binding residues include D543 and I544. Residue N572 is glycosylated (N-linked (GlcNAc...) asparagine). Positions 576 and 578 each coordinate Ca(2+).

The cofactor is Ca(2+).

The protein localises to the secreted. It is found in the extracellular space. The enzyme catalyses Release of an N-terminal tripeptide from a polypeptide.. Secreted tripeptidyl-peptidase which degrades proteins at acidic pHs and is involved in virulence. This Trichophyton verrucosum (strain HKI 0517) protein is Probable tripeptidyl-peptidase SED2 (SED2).